Consider the following 114-residue polypeptide: rRNA-processing protein cgrA (114 aa).

Residues methionine 1–arginine 96 form a disordered region. Positions alanine 40 to arginine 101 form a coiled coil. Residues lysine 41–lysine 93 are compositionally biased toward basic and acidic residues.

The protein belongs to the CGR1 family.

It is found in the nucleus. Its subcellular location is the nucleolus. Functionally, involved in nucleolar integrity and required for processing of the pre-rRNA for the 60S ribosome subunit. In Aspergillus terreus (strain NIH 2624 / FGSC A1156), this protein is rRNA-processing protein cgrA (cgrA).